The following is a 195-amino-acid chain: Imidazoleglycerol-phosphate dehydratase (195 aa).

The protein belongs to the imidazoleglycerol-phosphate dehydratase family.

It is found in the cytoplasm. It carries out the reaction D-erythro-1-(imidazol-4-yl)glycerol 3-phosphate = 3-(imidazol-4-yl)-2-oxopropyl phosphate + H2O. Its pathway is amino-acid biosynthesis; L-histidine biosynthesis; L-histidine from 5-phospho-alpha-D-ribose 1-diphosphate: step 6/9. This chain is Imidazoleglycerol-phosphate dehydratase, found in Methylorubrum extorquens (strain CM4 / NCIMB 13688) (Methylobacterium extorquens).